A 627-amino-acid polypeptide reads, in one-letter code: MATRPTDMVNTMQDAAVTCGPIPGSHKRYLGGVRFPELRIPLREIRQSDSRKRDGSLEVNPAIPVYDCSGPYTDPDVVIDIHAGLPAMRWQWSPTDTAIESRPEPGSAYGRARLADVRTADLRFHHRREIRRAANGGNVSQMHYARRGIITPEMEFVAIRENQGLEHLRASHPALFRAHRGESFGAQIPDTITPEFVRDEIARGRAIIPANINHPELEPMIIGRNFLVKINANIGNSAVTSSIAEEVEKMVWSIRWGADTVMDLSTGRHIHETREWIIRNSPVPIGTVPIYQALEKVDGKAEDLTWDLFRDTLIEQAEQGVDYFTIHAGVLLRYIPLTANRLTGIVSRGGSIMAKWCLAHHQESFLYTHFEEICEIMKAYDVSFSLGDGLRPGSLADANDEAQFAELHTLGELTRIAWKHDVQVMIEGPGHVPMQLIKANMEEELQHCFEAPFYTLGPLTTDIAPGYDHITSAIGAAQIGWYGTAMLCYVTPKEHLGLPDKNDVREGAITYKIAAHAADLAKGHPGAQVRDNALSKARFEFRWEDQFHLGLDPEKAREYHDETLPQEGAKAAHFCSMCGPHFCSMKISQDLQEYAQSKGEDIETARLEGLQEKAEDFKRLGKNIYLR.

Substrate is bound by residues N233, M262, Y291, H327, 347–349 (SRG), 388–391 (DGLR), and E427. H431 serves as a coordination point for Zn(2+). Residue Y454 participates in substrate binding. H495 serves as a coordination point for Zn(2+). 3 residues coordinate [4Fe-4S] cluster: C575, C578, and C583.

Belongs to the ThiC family. In terms of assembly, homodimer. [4Fe-4S] cluster is required as a cofactor.

It catalyses the reaction 5-amino-1-(5-phospho-beta-D-ribosyl)imidazole + S-adenosyl-L-methionine = 4-amino-2-methyl-5-(phosphooxymethyl)pyrimidine + CO + 5'-deoxyadenosine + formate + L-methionine + 3 H(+). It functions in the pathway cofactor biosynthesis; thiamine diphosphate biosynthesis. In terms of biological role, catalyzes the synthesis of the hydroxymethylpyrimidine phosphate (HMP-P) moiety of thiamine from aminoimidazole ribotide (AIR) in a radical S-adenosyl-L-methionine (SAM)-dependent reaction. In Acidithiobacillus ferrooxidans (strain ATCC 23270 / DSM 14882 / CIP 104768 / NCIMB 8455) (Ferrobacillus ferrooxidans (strain ATCC 23270)), this protein is Phosphomethylpyrimidine synthase.